The sequence spans 465 residues: Macrophage metalloelastase (465 aa).

A signal peptide spans 1 to 21 (MKFLLVLVLLVSLQVSACGAA). Positions 22–101 (PMNESEFAEW…DVQHLRAVPQ (80 aa)) are cleaved as a propeptide — activation peptide. The Cysteine switch signature appears at 86-93 (SRCGVPDV). Residue cysteine 88 coordinates Zn(2+). Residues aspartate 120 and aspartate 154 each contribute to the Ca(2+) site. Zn(2+)-binding residues include histidine 164 and aspartate 166. The Ca(2+) site is built by aspartate 171, glycine 172, glycine 174, and threonine 176. Histidine 179 is a Zn(2+) binding site. Glycine 186 and aspartate 190 together coordinate Ca(2+). Residue histidine 192 coordinates Zn(2+). Residues aspartate 194, glutamate 195, and glutamate 197 each contribute to the Ca(2+) site. Histidine 214 is a Zn(2+) binding site. Residue glutamate 215 is part of the active site. Residues histidine 218 and histidine 224 each contribute to the Zn(2+) site. A disulfide bond links cysteine 278 and cysteine 465. 4 Hemopexin repeats span residues 281 to 324 (SLSF…WPTI), 325 to 371 (PSGI…GFPA), 373 to 421 (VKKI…FPGI), and 422 to 465 (RPKI…WFGC). Position 285 (aspartate 285) interacts with Ca(2+). Asparagine 313 is a glycosylation site (N-linked (GlcNAc...) asparagine). Residues aspartate 377 and aspartate 426 each contribute to the Ca(2+) site.

Belongs to the peptidase M10A family. It depends on Ca(2+) as a cofactor. Zn(2+) serves as cofactor.

The protein resides in the secreted. Its subcellular location is the extracellular space. It localises to the extracellular matrix. The enzyme catalyses Hydrolysis of soluble and insoluble elastin. Specific cleavages are also produced at 14-Ala-|-Leu-15 and 16-Tyr-|-Leu-17 in the B chain of insulin.. Functionally, may be involved in tissue injury and remodeling. Has significant elastolytic activity. Can accept large and small amino acids at the P1' site, but has a preference for leucine. Aromatic or hydrophobic residues are preferred at the P1 site, with small hydrophobic residues (preferably alanine) occupying P3. The chain is Macrophage metalloelastase (Mmp12) from Rattus norvegicus (Rat).